The chain runs to 532 residues: Probable cytochrome c oxidase subunit 1 (532 aa).

A run of 8 helical transmembrane segments spans residues 33-53 (IMYI…SLLF), 74-94 (VLIT…ALFG), 95-115 (GFGN…FPRL), 118-138 (ISFW…FVDG), 163-183 (MAIF…INLI), 200-220 (PLFV…MPVL), 252-272 (LFWF…FGIV), and 284-304 (IFGY…GFIV). Fe(II)-heme a is bound at residue His-79. Cu cation-binding residues include His-258 and Tyr-262. Cu cation is bound by residues His-307 and His-308. A run of 2 helical transmembrane segments spans residues 318–338 (ALIY…IKIF) and 355–375 (MLFS…GIIL). Residue His-393 coordinates heme a3. The next 3 helical transmembrane spans lie at 394-414 (FHYT…YYWF), 431-451 (FWIT…LGLA), and 473-493 (IGAG…FYTL). Position 395 (His-395) interacts with Fe(II)-heme a.

Belongs to the heme-copper respiratory oxidase family.

The protein resides in the cell membrane. The catalysed reaction is 4 Fe(II)-[cytochrome c] + O2 + 8 H(+)(in) = 4 Fe(III)-[cytochrome c] + 2 H2O + 4 H(+)(out). The protein operates within energy metabolism; oxidative phosphorylation. Its function is as follows. Cytochrome c oxidase is the component of the respiratory chain that catalyzes the reduction of oxygen to water. Subunits 1-3 form the functional core of the enzyme complex. CO I is the catalytic subunit of the enzyme. Electrons originating in cytochrome c are transferred via the copper A center of subunit 2 and heme A of subunit 1 to the bimetallic center formed by heme A3 and copper B. The protein is Probable cytochrome c oxidase subunit 1 (ctaD) of Rickettsia bellii (strain RML369-C).